Consider the following 288-residue polypeptide: HTH-type transcriptional regulator CzcR (288 aa).

The HTH lysR-type domain occupies 1–58 (MELRDLQIFQSVADQGSVSSAAKELNYVQSNVTARIKQLENELKTPLFYRHKRGMTLT). Positions 18-37 (VSSAAKELNYVQSNVTARIK) form a DNA-binding region, H-T-H motif.

The protein belongs to the LysR transcriptional regulatory family.

The sequence is that of HTH-type transcriptional regulator CzcR (czcR) from Bacillus anthracis.